The following is a 151-amino-acid chain: Large-conductance mechanosensitive channel (151 aa).

2 helical membrane passes run 14 to 34 (VVDM…VNSL) and 85 to 105 (GLFV…FLLV).

The protein belongs to the MscL family. In terms of assembly, homopentamer.

The protein localises to the cell inner membrane. Its function is as follows. Channel that opens in response to stretch forces in the membrane lipid bilayer. May participate in the regulation of osmotic pressure changes within the cell. The sequence is that of Large-conductance mechanosensitive channel from Chlorobaculum tepidum (strain ATCC 49652 / DSM 12025 / NBRC 103806 / TLS) (Chlorobium tepidum).